The following is a 196-amino-acid chain: MSSYIPYVIERTGRGERSYDIYSRLLKDRIILLSGEINDHIASSIVAQLLFLEAEDPEKDINFYINSPGGVITSAFSIYDTMNYIHSDISTICIGQAASAGAFLLSSGTKGKRFSLPNSRIMIHQPLGGAQGQATDIEIQAREILRLKKILNEIMAHNTGQKIEKITQDTERDFFMSGEEAKKYGLVDEILTKSLK.

The active-site Nucleophile is Ser-99. Residue His-124 is part of the active site.

Belongs to the peptidase S14 family. In terms of assembly, fourteen ClpP subunits assemble into 2 heptameric rings which stack back to back to give a disk-like structure with a central cavity, resembling the structure of eukaryotic proteasomes.

It is found in the cytoplasm. It carries out the reaction Hydrolysis of proteins to small peptides in the presence of ATP and magnesium. alpha-casein is the usual test substrate. In the absence of ATP, only oligopeptides shorter than five residues are hydrolyzed (such as succinyl-Leu-Tyr-|-NHMec, and Leu-Tyr-Leu-|-Tyr-Trp, in which cleavage of the -Tyr-|-Leu- and -Tyr-|-Trp bonds also occurs).. Functionally, cleaves peptides in various proteins in a process that requires ATP hydrolysis. Has a chymotrypsin-like activity. Plays a major role in the degradation of misfolded proteins. This Helicobacter hepaticus (strain ATCC 51449 / 3B1) protein is ATP-dependent Clp protease proteolytic subunit.